The sequence spans 421 residues: ATP-dependent RNA helicase RhlB (421 aa).

The short motif at 9-37 is the Q motif element; it reads QKFSDFALHPKVVEALEKKGFHNCTPIQA. The 180-residue stretch at 40–219 folds into the Helicase ATP-binding domain; it reads LPLTLAGRDV…FEQMNNAEYI (180 aa). 53–60 contributes to the ATP binding site; it reads AQTGTGKT. A DEAD box motif is present at residues 165-168; it reads DEAD. A Helicase C-terminal domain is found at 245–390; that stretch reads RLLQTLIEEE…VSKYNPDALM (146 aa). The disordered stretch occupies residues 392 to 421; the sequence is DLPKPLRLTRPRTGNGPRRTGAPRNRRRSG. Positions 402–414 are enriched in low complexity; it reads PRTGNGPRRTGAP.

The protein belongs to the DEAD box helicase family. RhlB subfamily. Component of the RNA degradosome, which is a multiprotein complex involved in RNA processing and mRNA degradation.

It is found in the cytoplasm. It catalyses the reaction ATP + H2O = ADP + phosphate + H(+). Its function is as follows. DEAD-box RNA helicase involved in RNA degradation. Has RNA-dependent ATPase activity and unwinds double-stranded RNA. The chain is ATP-dependent RNA helicase RhlB from Escherichia coli O139:H28 (strain E24377A / ETEC).